Here is a 391-residue protein sequence, read N- to C-terminus: Succinate--CoA ligase [ADP-forming] subunit beta (391 aa).

The ATP-grasp domain occupies 9–245 (KQIFAEYGVP…LSEEDPDEVE (237 aa)). ATP-binding positions include lysine 46, 53–55 (GRG), glutamate 99, alanine 102, and glutamate 107. Residues asparagine 200 and aspartate 214 each coordinate Mg(2+). Substrate is bound by residues asparagine 265 and 322–324 (GIV).

The protein belongs to the succinate/malate CoA ligase beta subunit family. In terms of assembly, heterotetramer of two alpha and two beta subunits. Mg(2+) is required as a cofactor.

The catalysed reaction is succinate + ATP + CoA = succinyl-CoA + ADP + phosphate. It carries out the reaction GTP + succinate + CoA = succinyl-CoA + GDP + phosphate. Its pathway is carbohydrate metabolism; tricarboxylic acid cycle; succinate from succinyl-CoA (ligase route): step 1/1. In terms of biological role, succinyl-CoA synthetase functions in the citric acid cycle (TCA), coupling the hydrolysis of succinyl-CoA to the synthesis of either ATP or GTP and thus represents the only step of substrate-level phosphorylation in the TCA. The beta subunit provides nucleotide specificity of the enzyme and binds the substrate succinate, while the binding sites for coenzyme A and phosphate are found in the alpha subunit. In Sulfurovum sp. (strain NBC37-1), this protein is Succinate--CoA ligase [ADP-forming] subunit beta.